The chain runs to 240 residues: Fatty acid metabolism regulator protein (240 aa).

In terms of domain architecture, HTH gntR-type spans 6 to 74 (KGPASFAEKY…HGKPTRVNNF (69 aa)). Residues 34 to 53 (ERELSELIGVTRTTLREVLQ) constitute a DNA-binding region (H-T-H motif).

In terms of assembly, homodimer.

The protein localises to the cytoplasm. Functionally, multifunctional regulator of fatty acid metabolism. The sequence is that of Fatty acid metabolism regulator protein from Shewanella amazonensis (strain ATCC BAA-1098 / SB2B).